Here is an 89-residue protein sequence, read N- to C-terminus: Small ribosomal subunit protein uS14 (89 aa).

Belongs to the universal ribosomal protein uS14 family. As to quaternary structure, part of the 30S ribosomal subunit. Contacts proteins S3 and S10.

In terms of biological role, binds 16S rRNA, required for the assembly of 30S particles and may also be responsible for determining the conformation of the 16S rRNA at the A site. This Flavobacterium johnsoniae (strain ATCC 17061 / DSM 2064 / JCM 8514 / BCRC 14874 / CCUG 350202 / NBRC 14942 / NCIMB 11054 / UW101) (Cytophaga johnsonae) protein is Small ribosomal subunit protein uS14.